Consider the following 656-residue polypeptide: NADH-ubiquinone oxidoreductase chain 5 (656 aa).

17 consecutive transmembrane segments (helical) span residues 5-23 (IIIL…GRKL), 30-52 (IITC…EVGF), 81-103 (LTVS…SISY), 112-129 (RFFS…ILVT), 133-155 (YLLM…SFWF), 168-190 (FLTN…WSLG), 200-222 (LAPY…GAMA), 243-262 (VSAL…LLMR), 272-294 (TVLL…VGLF), 301-320 (VIAY…IGLS), 324-346 (IALF…AGSI), 367-389 (PLTY…LTGF), 409-431 (SVYA…VIYL), 452-471 (IFLT…FGYL), 514-536 (FIFT…GSVF), 607-629 (LSTG…FIII), and 634-653 (QISS…SLNF).

It belongs to the complex I subunit 5 family.

It is found in the mitochondrion inner membrane. The enzyme catalyses a ubiquinone + NADH + 5 H(+)(in) = a ubiquinol + NAD(+) + 4 H(+)(out). In terms of biological role, core subunit of the mitochondrial membrane respiratory chain NADH dehydrogenase (Complex I) that is believed to belong to the minimal assembly required for catalysis. Complex I functions in the transfer of electrons from NADH to the respiratory chain. The immediate electron acceptor for the enzyme is believed to be ubiquinone. The sequence is that of NADH-ubiquinone oxidoreductase chain 5 (ND5) from Cryphonectria parasitica (Chestnut blight fungus).